Here is a 340-residue protein sequence, read N- to C-terminus: Phosphoribosylformylglycinamidine cyclo-ligase (340 aa).

This sequence belongs to the AIR synthase family.

Its subcellular location is the cytoplasm. The catalysed reaction is 2-formamido-N(1)-(5-O-phospho-beta-D-ribosyl)acetamidine + ATP = 5-amino-1-(5-phospho-beta-D-ribosyl)imidazole + ADP + phosphate + H(+). It participates in purine metabolism; IMP biosynthesis via de novo pathway; 5-amino-1-(5-phospho-D-ribosyl)imidazole from N(2)-formyl-N(1)-(5-phospho-D-ribosyl)glycinamide: step 2/2. This chain is Phosphoribosylformylglycinamidine cyclo-ligase, found in Streptococcus pneumoniae (strain 70585).